Consider the following 135-residue polypeptide: NAD(P)H-quinone oxidoreductase subunit 3 (135 aa).

3 consecutive transmembrane segments (helical) span residues 15–35, 79–99, and 104–124; these read LMFVLPGYDAFLGFLLIAAAV, MFALVFVIFDVETVFLYPWAV, and LGLLAFIEALVFITILLVALA.

The protein belongs to the complex I subunit 3 family. In terms of assembly, NDH-1 can be composed of about 15 different subunits; different subcomplexes with different compositions have been identified which probably have different functions.

Its subcellular location is the cellular thylakoid membrane. The catalysed reaction is a plastoquinone + NADH + (n+1) H(+)(in) = a plastoquinol + NAD(+) + n H(+)(out). The enzyme catalyses a plastoquinone + NADPH + (n+1) H(+)(in) = a plastoquinol + NADP(+) + n H(+)(out). In terms of biological role, NDH-1 shuttles electrons from an unknown electron donor, via FMN and iron-sulfur (Fe-S) centers, to quinones in the respiratory and/or the photosynthetic chain. The immediate electron acceptor for the enzyme in this species is believed to be plastoquinone. Couples the redox reaction to proton translocation, and thus conserves the redox energy in a proton gradient. Cyanobacterial NDH-1 also plays a role in inorganic carbon-concentration. The protein is NAD(P)H-quinone oxidoreductase subunit 3 of Synechococcus sp. (strain CC9311).